Consider the following 192-residue polypeptide: Secreted phosphoprotein 24 (192 aa).

Positions 1–18 (MKWCVLMLALLQSLCCSG) are cleaved as a signal peptide. 2 disulfides stabilise this stretch: C82/C93 and C106/C124. The disordered stretch occupies residues 124–192 (CGQDSSSSES…RGDSIGNHLE (69 aa)). Low complexity predominate over residues 128–137 (SSSSESSSEE).

It belongs to the SPP2 family. Multiply phosphorylated at serine residues.

It is found in the secreted. Its function is as follows. Could coordinate an aspect of bone turnover. This Oncorhynchus mykiss (Rainbow trout) protein is Secreted phosphoprotein 24 (spp2).